A 325-amino-acid chain; its full sequence is Putative 1-aminocyclopropane-1-carboxylate deaminase (325 aa).

At Lys54 the chain carries N6-(pyridoxal phosphate)lysine.

The protein belongs to the ACC deaminase/D-cysteine desulfhydrase family. It depends on pyridoxal 5'-phosphate as a cofactor.

The catalysed reaction is 1-aminocyclopropane-1-carboxylate + H2O = 2-oxobutanoate + NH4(+). The protein is Putative 1-aminocyclopropane-1-carboxylate deaminase of Pyrococcus horikoshii (strain ATCC 700860 / DSM 12428 / JCM 9974 / NBRC 100139 / OT-3).